The chain runs to 192 residues: Anthrone oxygenase (192 aa).

The next 3 helical transmembrane spans lie at 12-32 (IVTGSFLSGAMITLSTITVPV), 54-74 (GHISLPTISIATAILYFYIAA), and 86-106 (AALVGFLTIVMVPFTWIVMSS). N-linked (GlcNAc...) asparagine glycosylation is found at Asn130, Asn138, and Asn147. A helical membrane pass occupies residues 172–192 (MHLVRSLFPLMAAVLGVGICV).

This sequence belongs to the anthrone oxygenase family.

Its subcellular location is the membrane. The enzyme catalyses emodin anthrone + O2 = emodin + H2O + H(+). It functions in the pathway secondary metabolite biosynthesis. In terms of biological role, anthrone oxygenase; part of the gene cluster that mediates the biosynthesis of monodictyphenone, a prenyl xanthone derivative. The pathway begins with the synthesis of atrochrysone thioester by the polyketide synthase (PKS) mdpG. The atrochrysone carboxyl ACP thioesterase mdpF then breaks the thioester bond and releases the atrochrysone carboxylic acid from mdpG. The atrochrysone carboxylic acid is then converted to atrochrysone which is further transformed into emodin anthrone by mdpH-1 and mdpH-2. Emodin is further modified to yield monodictyphenone via several steps involving mdpB, mdpC mdpJ, mdpK and mdpL. These enzymes with xptA, xptB and xptC are also proposed to be involved in the synthesis of shamixanthone from emodin. Especially, direct reduction of emodin by the short chain dehydrogenase mdpC followed by dehydration catalyzed by the scytalone dehydratase-like protein mdpB gives loss of oxygen and formation of chrysophanol intermediate in two simple steps. This Emericella nidulans (strain FGSC A4 / ATCC 38163 / CBS 112.46 / NRRL 194 / M139) (Aspergillus nidulans) protein is Anthrone oxygenase.